The following is a 313-amino-acid chain: Protein-methionine-sulfoxide reductase catalytic subunit MsrP (313 aa).

A signal peptide (tat-type signal) is located at residues 1–44; that stretch reads MARWRPDMAEREATPEALYLRRRDFLALGAAGAVGLLLPRGARA. Residues Asn76, 79-80, Cys134, Thr169, Asn217, Arg222, and 233-235 each bind Mo-molybdopterin; these read YE and GAK.

It belongs to the MsrP family. As to quaternary structure, heterodimer of a catalytic subunit (MsrP) and a heme-binding subunit (MsrQ). Mo-molybdopterin is required as a cofactor. Predicted to be exported by the Tat system. The position of the signal peptide cleavage has not been experimentally proven.

It localises to the periplasm. The catalysed reaction is L-methionyl-[protein] + a quinone + H2O = L-methionyl-(S)-S-oxide-[protein] + a quinol. The enzyme catalyses L-methionyl-[protein] + a quinone + H2O = L-methionyl-(R)-S-oxide-[protein] + a quinol. Part of the MsrPQ system that repairs oxidized periplasmic proteins containing methionine sulfoxide residues (Met-O), using respiratory chain electrons. Thus protects these proteins from oxidative-stress damage caused by reactive species of oxygen and chlorine generated by the host defense mechanisms. MsrPQ is essential for the maintenance of envelope integrity under bleach stress, rescuing a wide series of structurally unrelated periplasmic proteins from methionine oxidation. The catalytic subunit MsrP is non-stereospecific, being able to reduce both (R-) and (S-) diastereoisomers of methionine sulfoxide. In Anaeromyxobacter dehalogenans (strain 2CP-1 / ATCC BAA-258), this protein is Protein-methionine-sulfoxide reductase catalytic subunit MsrP.